The primary structure comprises 315 residues: Homoserine kinase (315 aa).

Proline 97–threonine 107 contacts ATP.

Belongs to the GHMP kinase family. Homoserine kinase subfamily.

The protein localises to the cytoplasm. The enzyme catalyses L-homoserine + ATP = O-phospho-L-homoserine + ADP + H(+). It participates in amino-acid biosynthesis; L-threonine biosynthesis; L-threonine from L-aspartate: step 4/5. Functionally, catalyzes the ATP-dependent phosphorylation of L-homoserine to L-homoserine phosphate. In Synechococcus sp. (strain CC9311), this protein is Homoserine kinase.